The sequence spans 393 residues: NAD(P)H-quinone oxidoreductase subunit H, chloroplastic (393 aa).

It belongs to the complex I 49 kDa subunit family. In terms of assembly, NDH is composed of at least 16 different subunits, 5 of which are encoded in the nucleus.

It localises to the plastid. The protein localises to the chloroplast thylakoid membrane. The enzyme catalyses a plastoquinone + NADH + (n+1) H(+)(in) = a plastoquinol + NAD(+) + n H(+)(out). It catalyses the reaction a plastoquinone + NADPH + (n+1) H(+)(in) = a plastoquinol + NADP(+) + n H(+)(out). NDH shuttles electrons from NAD(P)H:plastoquinone, via FMN and iron-sulfur (Fe-S) centers, to quinones in the photosynthetic chain and possibly in a chloroplast respiratory chain. The immediate electron acceptor for the enzyme in this species is believed to be plastoquinone. Couples the redox reaction to proton translocation, and thus conserves the redox energy in a proton gradient. The polypeptide is NAD(P)H-quinone oxidoreductase subunit H, chloroplastic (Amborella trichopoda).